A 723-amino-acid polypeptide reads, in one-letter code: Host cell factor 2 (723 aa).

4 Kelch repeats span residues 34–79, 83–130, 207–255, and 257–305; these read LMII…GFVC, RILV…RLGH, KMYV…VIGN, and MYIF…DSQE. Fibronectin type-III domains follow at residues 357–436, 516–606, and 608–720; these read PPAP…ANCT, TPSN…TCIP, and FPGA…SKKA. The interval 398 to 472 is disordered; the sequence is AASPDASAAP…VALHSPLAPN (75 aa). Over residues 419–433 the composition is skewed to polar residues; the sequence is QGSNSILHNSVSDPA.

Binds KMT2A/MLL1. Component of the MLL1/MLL complex, at least composed of KMT2A/MLL1, ASH2L, RBBP5, DPY30, WDR5, MEN1, HCFC1 and HCFC2. Interacts with TASOR.

Its subcellular location is the cytoplasm. The protein localises to the nucleus. In Rattus norvegicus (Rat), this protein is Host cell factor 2 (Hcfc2).